The sequence spans 245 residues: 1-(5-phosphoribosyl)-5-[(5-phosphoribosylamino)methylideneamino] imidazole-4-carboxamide isomerase (245 aa).

The Proton acceptor role is filled by D7. The Proton donor role is filled by D129.

The protein belongs to the HisA/HisF family.

It localises to the cytoplasm. It carries out the reaction 1-(5-phospho-beta-D-ribosyl)-5-[(5-phospho-beta-D-ribosylamino)methylideneamino]imidazole-4-carboxamide = 5-[(5-phospho-1-deoxy-D-ribulos-1-ylimino)methylamino]-1-(5-phospho-beta-D-ribosyl)imidazole-4-carboxamide. The protein operates within amino-acid biosynthesis; L-histidine biosynthesis; L-histidine from 5-phospho-alpha-D-ribose 1-diphosphate: step 4/9. This is 1-(5-phosphoribosyl)-5-[(5-phosphoribosylamino)methylideneamino] imidazole-4-carboxamide isomerase from Shewanella oneidensis (strain ATCC 700550 / JCM 31522 / CIP 106686 / LMG 19005 / NCIMB 14063 / MR-1).